A 213-amino-acid polypeptide reads, in one-letter code: Orotate phosphoribosyltransferase (213 aa).

K26 is a 5-phospho-alpha-D-ribose 1-diphosphate binding site. Position 34-35 (34-35 (FF)) interacts with orotate. Residues 72–73 (YK), R99, K100, K103, H105, and 124–132 (DDVITAGTA) each bind 5-phospho-alpha-D-ribose 1-diphosphate. Positions 128 and 156 each coordinate orotate.

It belongs to the purine/pyrimidine phosphoribosyltransferase family. PyrE subfamily. Homodimer. It depends on Mg(2+) as a cofactor.

It carries out the reaction orotidine 5'-phosphate + diphosphate = orotate + 5-phospho-alpha-D-ribose 1-diphosphate. It functions in the pathway pyrimidine metabolism; UMP biosynthesis via de novo pathway; UMP from orotate: step 1/2. Catalyzes the transfer of a ribosyl phosphate group from 5-phosphoribose 1-diphosphate to orotate, leading to the formation of orotidine monophosphate (OMP). This is Orotate phosphoribosyltransferase from Shigella dysenteriae serotype 1 (strain Sd197).